Here is a 164-residue protein sequence, read N- to C-terminus: Methanogen homoaconitase small subunit 2 (164 aa).

The short motif at 26 to 29 (YLRT) is the YLRT element.

It belongs to the LeuD family. LeuD type 2 subfamily. As to quaternary structure, heterotetramer of 2 HacA and 2 HacB proteins. Cannot form a complex with LeuC.

The enzyme catalyses (2R)-homocitrate = (2R,3S)-homoisocitrate. The catalysed reaction is (2R)-homocitrate = cis-homoaconitate + H2O. It catalyses the reaction (2R,3S)-homoisocitrate = cis-homoaconitate + H2O. It carries out the reaction cis-(homo)2aconitate + H2O = (2R,3S)-iso(homo)2citrate. The enzyme catalyses cis-(homo)3aconitate + H2O = (2R,3S)-iso(homo)3citrate. The protein operates within organic acid metabolism; 2-oxosuberate biosynthesis. Component of a hydro-lyase with broad substrate specificity for cis-unsaturated tricarboxylic acids. Catalyzes both the reversible dehydration of (R)-homocitrate ((R)-2-hydroxybutane-1,2,4-tricarboxylate) to produce cis-homoaconitate ((Z)-but-1-ene-1,2,4-tricarboxylate), and its hydration to homoisocitrate ((1R,2S)-1-hydroxybutane-1,2,4-tricarboxylate). Is also able to hydrate the analogous longer chain substrates cis-homo(2)-aconitate, cis-homo(3)-aconitate. These reactions are part of the biosynthesis pathway of coenzyme B. This is Methanogen homoaconitase small subunit 2 (hacB2) from Methanosarcina acetivorans (strain ATCC 35395 / DSM 2834 / JCM 12185 / C2A).